The chain runs to 1009 residues: UvrABC system protein A (1009 aa).

Residue 32 to 39 participates in ATP binding; it reads GLSGSGKS. 2 ABC transporter domains span residues 314–592 and 612–941; these read WSHG…AESQ and RDPS…KFLR. 645–652 serves as a coordination point for ATP; sequence GVSGSGKS. The C4-type zinc-finger motif lies at 744–770; it reads CENCSGDGTIKIEMNFLPDVYVPCEVC. The segment at 956-1009 is disordered; the sequence is KAPRKTAARKTAAAKSTTKKTATVRTTNNTATKKAAAVTKKTAPAKKTTRARKA. Over residues 964 to 997 the composition is skewed to low complexity; sequence RKTAAAKSTTKKTATVRTTNNTATKKAAAVTKKT. Over residues 998–1009 the composition is skewed to basic residues; it reads APAKKTTRARKA.

This sequence belongs to the ABC transporter superfamily. UvrA family. Forms a heterotetramer with UvrB during the search for lesions.

The protein resides in the cytoplasm. In terms of biological role, the UvrABC repair system catalyzes the recognition and processing of DNA lesions. UvrA is an ATPase and a DNA-binding protein. A damage recognition complex composed of 2 UvrA and 2 UvrB subunits scans DNA for abnormalities. When the presence of a lesion has been verified by UvrB, the UvrA molecules dissociate. In Streptomyces avermitilis (strain ATCC 31267 / DSM 46492 / JCM 5070 / NBRC 14893 / NCIMB 12804 / NRRL 8165 / MA-4680), this protein is UvrABC system protein A.